The primary structure comprises 654 residues: Sphingosine kinase 2 (654 aa).

Residues 1 to 17 are compositionally biased toward basic and acidic residues; the sequence is MNGHLEAEEQQDQRPDQ. Positions 1–28 are disordered; the sequence is MNGHLEAEEQQDQRPDQELTGSWGHGPR. Residues 1 to 175 are required for binding to sulfatide and phosphoinositides and for membrane localizatione; that stretch reads MNGHLEAEEQ…LPGDGEITPD (175 aa). Positions 122–130 match the Nuclear localization signal motif; the sequence is RGRRGARRR. Residues 178–325 form the DAGKc domain; it reads PRPPRLLLLV…LDLLSVTLAS (148 aa). ATP-binding positions include 188–190 and 220–224; these read NPF and TERQN. 245–248 is a substrate binding site; it reads SGDG. Aspartate 247 acts as the Proton donor/acceptor in catalysis. Residues glutamate 252 and 277-279 contribute to the ATP site; that span reads GSG. A substrate-binding site is contributed by aspartate 344. Positions 351 and 357 each coordinate ATP. The residue at position 387 (serine 387) is a Phosphoserine; by MAPK. A phosphoserine mark is found at serine 393 and serine 399. The disordered stretch occupies residues 400-509; that stretch reads ELTLTPDPAP…PLPTPDARVG (110 aa). A Nuclear export signal motif is present at residues 416 to 425; it reads LHRSVSDLPL. Residues serine 419 and serine 421 each carry the phosphoserine; by PKD modification. Over residues 447-461 the composition is skewed to gly residues; that stretch reads NGGGPELAGDWGGAG. Residues 462–482 show a composition bias toward low complexity; the sequence is DAPLSPDPLLSSPPGSPKAAL. Serine 477 is modified (phosphoserine). The residue at position 614 (threonine 614) is a Phosphothreonine; by MAPK. Residue 622-624 participates in ATP binding; that stretch reads DGE.

Interacts with histone H3. Interacts with HDAC1, HDAC2, MBD2 and SIN3A. Interacts with EEF1A1; the interaction enhances SPHK2 kinase activity. Interacts with PHB2. Requires Mg(2+) as cofactor. Post-translationally, phosphorylated by PKD on Ser-419 and Ser-421 upon PMA treatment. Phosphorylation induces export from the nucleus to the cytoplasm. Phosphorylated by MAPK1 and MAPK2 at Ser-387 and Thr-614, phosphorylation is induced by agonists such as EGF and PMA and increases kinase activity. Cleaved by CASP1 in apoptotic cells. The truncated form is released from cells. Mainly expressed in adult kidney, liver, and brain. Expressed in cerebral cortex and hippocampus (at protein level). Isoform 1 is the predominant form expressed in most tissues.

It localises to the cytoplasm. The protein resides in the nucleus. The protein localises to the endoplasmic reticulum. It is found in the mitochondrion inner membrane. Its subcellular location is the lysosome membrane. The catalysed reaction is a sphingoid base + ATP = a sphingoid 1-phosphate + ADP + H(+). The enzyme catalyses sphing-4-enine + ATP = sphing-4-enine 1-phosphate + ADP + H(+). It carries out the reaction sphinganine + ATP = sphinganine 1-phosphate + ADP + H(+). It catalyses the reaction (4R)-hydroxysphinganine + ATP = (4R)-hydroxysphinganine 1-phosphate + ADP + H(+). Inhibited by sulfatide. Kinase activity is increased by phosphorylation by MAPK2 upon PMA or EGF treatments. Functionally, catalyzes the phosphorylation of sphingosine to form sphingosine-1-phosphate (SPP), a lipid mediator with both intra- and extracellular functions. Also acts on D-erythro-dihydrosphingosine, D-erythro-sphingosine and L-threo-dihydrosphingosine. Binds phosphoinositides. In contrast to prosurvival SPHK1, has a positive effect on intracellular ceramide levels, inhibits cells growth and enhances apoptosis. In mitochondria, is important for cytochrome-c oxidase assembly and mitochondrial respiration. The SPP produced in mitochondria binds PHB2 and modulates the regulation via PHB2 of complex IV assembly and respiration. In nucleus, plays a role in epigenetic regulation of gene expression. Interacts with HDAC1 and HDAC2 and, through SPP production, inhibits their enzymatic activity, preventing the removal of acetyl groups from lysine residues with histones. Up-regulates acetylation of histone H3-K9, histone H4-K5 and histone H2B-K12. In nucleus, may have an inhibitory effect on DNA synthesis and cell cycle. In mast cells, is the main regulator of SPP production which mediates calcium influx, NF-kappa-B activation, cytokine production, such as TNF and IL6, and degranulation of mast cells. In dopaminergic neurons, is involved in promoting mitochondrial functions regulating ATP and ROS levels. Also involved in the regulation of glucose and lipid metabolism. The sequence is that of Sphingosine kinase 2 from Homo sapiens (Human).